Consider the following 512-residue polypeptide: Glycine betaine transporter OpuD (512 aa).

The next 12 membrane-spanning stretches (helical) occupy residues 5–25 (ISSVFWIVIAITAAAVLWGVI), 45–65 (FGWYYLLVVSLFVGFCLFLIF), 82–102 (FGLLSWFAMLFSAGMGIGLVF), 135–155 (FFHWGLHAWAIYAIVALCIAY), 186–206 (IDCIAVFATVVGVSTSLGLGA), 222–242 (AFIVQLVLIIIVTVLFLLSAW), 257–277 (MVLAGLLMLFMLVVGPTVLIM), 312–332 (WTIFYWAWWISWSPFVGIFIA), 343–363 (FLIGVLVTPCILTFLWFSIFG), 395–415 (LTMVTSILALILIAVFFITSA), 441–461 (WGIIQSAMAAVLLYSGGLAAL), and 464–484 (TAILAALPFSIVILLMIASLY).

It belongs to the BCCT transporter (TC 2.A.15) family.

It is found in the cell membrane. Activity is stimulated by high osmolarity. Its function is as follows. High-affinity uptake of glycine betaine. Does not mediate either carnitine or choline uptake. The chain is Glycine betaine transporter OpuD (opuD) from Bacillus subtilis (strain 168).